A 420-amino-acid chain; its full sequence is MAP kinase-interacting serine/threonine-protein kinase 1 (420 aa).

Positions 1 to 25 are disordered; sequence MGSSEPIPIAESDKRKKKKRKARAT. S27 bears the Phosphoserine; by PAK2 mark. The Protein kinase domain occupies 37-321; it reads KLTSELLGEG…AAQVLQHPWV (285 aa). ATP-binding positions include 43–51 and K66; that span reads LGEGANAKV. D158 serves as the catalytic Proton acceptor. S168 and S173 each carry phosphoserine. T197, T202, and T332 each carry phosphothreonine. Positions 386-420 are disordered; sequence LSPPSKSRLARRRALAQAGRSGDAPPSPTPTTPAP. Residues 400-409 show a composition bias toward low complexity; the sequence is LAQAGRSGDA. A compositionally biased stretch (pro residues) spans 410-420; the sequence is PPSPTPTTPAP.

It belongs to the protein kinase superfamily. CAMK Ser/Thr protein kinase family. As to quaternary structure, interacts with the C-terminal regions of EIF4G1 and EIF4G2. Also binds to dephosphorylated ERK1 and ERK2, and to the p38 kinases. The cofactor is Mg(2+). In terms of processing, dual phosphorylation of Thr-197 and Thr-202 activates the kinase. Phosphorylation of Thr-332 activates the kinase. MAPK3/ERK1 is one of the kinases which activate MKNK1/MNK1. Phosphorylation by PAK2 leads to a reduced phosphorylation of EIF4G1.

It catalyses the reaction L-seryl-[protein] + ATP = O-phospho-L-seryl-[protein] + ADP + H(+). The enzyme catalyses L-threonyl-[protein] + ATP = O-phospho-L-threonyl-[protein] + ADP + H(+). Phosphorylated and activated by the p38 kinases and kinases in the Erk pathway. May play a role in the response to environmental stress and cytokines. Appears to regulate translation by phosphorylating EIF4E, thus increasing the affinity of this protein for the 7-methylguanosine-containing mRNA cap. This Bos taurus (Bovine) protein is MAP kinase-interacting serine/threonine-protein kinase 1 (MKNK1).